The following is a 294-amino-acid chain: MTTAITPDKKKLVSPKPTKTTSDKSKTKPRRSSKTSKKRKSKKGLFGCCAKKRKTKRSKKSAKRTKRSAPKKAPKKAPMKAPSKPAAKLVPQQAQASLQKPIQSGIVDADATVKTVVPRPPTPIPPTGVKPEPAPRSEPLYQPRSVSSTTPRTSATTGTTEQMVTAPATLPPPSAESKHLPQDPPGDASSPRVQRQYTAEKYSKEDQDDDDQKDLRKSVAYPSHKFFMTQYVKDECRVRRWVYEDSVPLMMESNMKHMLRMASNRIAACQSDKARRCDMMKDLNEMTEILDGNF.

Positions 1 to 215 (MTTAITPDKK…DQDDDDQKDL (215 aa)) are disordered. Basic residues-rich tracts occupy residues 27–43 (TKPR…KSKK) and 50–78 (AKKR…KKAP). Low complexity predominate over residues 79 to 88 (MKAPSKPAAK). The span at 92–102 (QQAQASLQKPI) shows a compositional bias: polar residues. Positions 118 to 136 (PRPPTPIPPTGVKPEPAPR) are enriched in pro residues. Over residues 145–160 (SVSSTTPRTSATTGTT) the composition is skewed to low complexity.

This is an uncharacterized protein from Caenorhabditis elegans.